A 420-amino-acid polypeptide reads, in one-letter code: Serine hydroxymethyltransferase (420 aa).

(6S)-5,6,7,8-tetrahydrofolate-binding positions include Leu-121 and Gly-125–Leu-127. Lys-230 is modified (N6-(pyridoxal phosphate)lysine). Ser-355–Phe-357 contacts (6S)-5,6,7,8-tetrahydrofolate.

Belongs to the SHMT family. Homodimer. It depends on pyridoxal 5'-phosphate as a cofactor.

It localises to the cytoplasm. The catalysed reaction is (6R)-5,10-methylene-5,6,7,8-tetrahydrofolate + glycine + H2O = (6S)-5,6,7,8-tetrahydrofolate + L-serine. It participates in one-carbon metabolism; tetrahydrofolate interconversion. It functions in the pathway amino-acid biosynthesis; glycine biosynthesis; glycine from L-serine: step 1/1. In terms of biological role, catalyzes the reversible interconversion of serine and glycine with tetrahydrofolate (THF) serving as the one-carbon carrier. This reaction serves as the major source of one-carbon groups required for the biosynthesis of purines, thymidylate, methionine, and other important biomolecules. Also exhibits THF-independent aldolase activity toward beta-hydroxyamino acids, producing glycine and aldehydes, via a retro-aldol mechanism. The polypeptide is Serine hydroxymethyltransferase (Streptococcus gordonii (strain Challis / ATCC 35105 / BCRC 15272 / CH1 / DL1 / V288)).